Reading from the N-terminus, the 394-residue chain is MAKEQFQRNKPHVNVGTIGHVDHGKTSLTAAITSVLAKKGFAEARGYDQIDAAPEERERGITISTAHVEYETENRHYAHVDCPGHADYVKNMITGAAQMDGAILVVAASDGPMPQTREHILLARQVGVPAIVVYMNKCDLVDDPDLLELVEMEIRELLNEYEFPGDDTPIIKGSAVKALEGDAAAEDSIMELMAAVDSYIPQPERPVDQPFLMPVEDVFSISGRGTVATGRIERGVIKKMEEVEIIGIKDTQKTAVTDIEMFRKLLDEGQAGDNVGLLLRGLKKEDIERGQVIIKPGTVKPHKNFKAEVYVLTKEEGGRHTPFFNNYRPQFYFRTTDVTGCCTLPEGVEMVMPGDNVNLEVQLITPIAMEKAMRFAIREGGRTVGAGRISEILD.

Residues 10–204 (KPHVNVGTIG…AVDSYIPQPE (195 aa)) enclose the tr-type G domain. A G1 region spans residues 19 to 26 (GHVDHGKT). 19–26 (GHVDHGKT) contacts GTP. T26 contacts Mg(2+). A G2 region spans residues 60-64 (GITIS). The segment at 81-84 (DCPG) is G3. Residues 81 to 85 (DCPGH) and 136 to 139 (NKCD) contribute to the GTP site. The G4 stretch occupies residues 136 to 139 (NKCD). The segment at 174–176 (SAV) is G5.

It belongs to the TRAFAC class translation factor GTPase superfamily. Classic translation factor GTPase family. EF-Tu/EF-1A subfamily. As to quaternary structure, monomer.

It is found in the cytoplasm. The catalysed reaction is GTP + H2O = GDP + phosphate + H(+). GTP hydrolase that promotes the GTP-dependent binding of aminoacyl-tRNA to the A-site of ribosomes during protein biosynthesis. This chain is Elongation factor Tu, found in Akkermansia muciniphila (strain ATCC BAA-835 / DSM 22959 / JCM 33894 / BCRC 81048 / CCUG 64013 / CIP 107961 / Muc).